The following is a 213-amino-acid chain: tRNA (guanine-N(7)-)-methyltransferase (213 aa).

S-adenosyl-L-methionine-binding residues include E44, E69, D96, and D118. Residue D118 is part of the active site. Substrate is bound by residues K122, D154, and 191 to 194; that span reads TEYE.

This sequence belongs to the class I-like SAM-binding methyltransferase superfamily. TrmB family.

The enzyme catalyses guanosine(46) in tRNA + S-adenosyl-L-methionine = N(7)-methylguanosine(46) in tRNA + S-adenosyl-L-homocysteine. It functions in the pathway tRNA modification; N(7)-methylguanine-tRNA biosynthesis. Functionally, catalyzes the formation of N(7)-methylguanine at position 46 (m7G46) in tRNA. The protein is tRNA (guanine-N(7)-)-methyltransferase of Exiguobacterium sibiricum (strain DSM 17290 / CCUG 55495 / CIP 109462 / JCM 13490 / 255-15).